The chain runs to 979 residues: UPF0182 protein MT0070 (979 aa).

7 helical membrane passes run 19-41 (LVTA…DIYV), 63-85 (LAIV…LLAY), 114-136 (LFGW…FDWV), 174-196 (WLFV…FGGL), 208-230 (AARV…AYWL), 261-280 (LVLV…AIFL), and 285-307 (IPAM…WPLL). A disordered region spans residues 894 to 948 (VFGPGTGRVATXPGGDAASAPPPGAGGPAPPQGVPPPRTTQPPAAPPRGPDVPPA). Residues 913–946 (APPPGAGGPAPPQGVPPPRTTQPPAAPPRGPDVP) show a composition bias toward pro residues.

Belongs to the UPF0182 family.

The protein resides in the cell membrane. In Mycobacterium tuberculosis (strain CDC 1551 / Oshkosh), this protein is UPF0182 protein MT0070.